Consider the following 404-residue polypeptide: Probable ketol-acid reductoisomerase, mitochondrial (404 aa).

Positions 63-253 (TKENVWERSD…AVGSGFIYQT (191 aa)) constitute a KARI N-terminal Rossmann domain. NADP(+) is bound by residues 91 to 100 (GYGSQGHGQG), 115 to 120 (RKDGAS), and 153 to 157 (SDAAQ). His178 is an active-site residue. Residues 254–401 (TFKKEVISDL…EVVRSLRPEH (148 aa)) enclose the KARI C-terminal knotted domain. Ser261 carries the phosphoserine modification. Positions 262, 266, 298, and 302 each coordinate Mg(2+). A substrate-binding site is contributed by Ser324.

The protein belongs to the ketol-acid reductoisomerase family. The cofactor is Mg(2+).

It localises to the mitochondrion. It carries out the reaction (2R)-2,3-dihydroxy-3-methylbutanoate + NADP(+) = (2S)-2-acetolactate + NADPH + H(+). The catalysed reaction is (2R,3R)-2,3-dihydroxy-3-methylpentanoate + NADP(+) = (S)-2-ethyl-2-hydroxy-3-oxobutanoate + NADPH + H(+). Its pathway is amino-acid biosynthesis; L-isoleucine biosynthesis; L-isoleucine from 2-oxobutanoate: step 2/4. The protein operates within amino-acid biosynthesis; L-valine biosynthesis; L-valine from pyruvate: step 2/4. The protein is Probable ketol-acid reductoisomerase, mitochondrial (ilv5) of Schizosaccharomyces pombe (strain 972 / ATCC 24843) (Fission yeast).